A 63-amino-acid chain; its full sequence is MGSTSDKIAGKTNEVAGKVKKNVGEATGNNELRAKGAAQETKGKVQTSVGKAKDAVKGAVDRM.

A disordered region spans residues M1–M63. The segment covering K51–M63 has biased composition (basic and acidic residues).

It belongs to the UPF0337 (CsbD) family.

The polypeptide is UPF0337 protein Atu0782 (Agrobacterium fabrum (strain C58 / ATCC 33970) (Agrobacterium tumefaciens (strain C58))).